Reading from the N-terminus, the 320-residue chain is o-succinylbenzoate synthase (320 aa).

Residue Lys-133 is the Proton donor of the active site. Residues Asp-161, Glu-190, and Asp-213 each coordinate Mg(2+). Residue Lys-235 is the Proton acceptor of the active site.

Belongs to the mandelate racemase/muconate lactonizing enzyme family. MenC type 1 subfamily. A divalent metal cation is required as a cofactor.

It carries out the reaction (1R,6R)-6-hydroxy-2-succinyl-cyclohexa-2,4-diene-1-carboxylate = 2-succinylbenzoate + H2O. The protein operates within quinol/quinone metabolism; 1,4-dihydroxy-2-naphthoate biosynthesis; 1,4-dihydroxy-2-naphthoate from chorismate: step 4/7. Its pathway is quinol/quinone metabolism; menaquinone biosynthesis. Functionally, converts 2-succinyl-6-hydroxy-2,4-cyclohexadiene-1-carboxylate (SHCHC) to 2-succinylbenzoate (OSB). This Salmonella dublin (strain CT_02021853) protein is o-succinylbenzoate synthase.